A 388-amino-acid chain; its full sequence is GTPase Obg (388 aa).

The 159-residue stretch at 1–159 folds into the Obg domain; sequence MKFVDEATIR…RSLRLELMLL (159 aa). Residues 160–333 form the OBG-type G domain; that stretch reads ADVGLLGMPN…LALKLLDFID (174 aa). Residues 166–173, 191–195, 213–216, 283–286, and 314–316 each bind GTP; these read GMPNAGKS, FTTLV, DIPG, NKAD, and SAY. Residues Ser-173 and Thr-193 each coordinate Mg(2+). Residues 356–377 form a disordered region; sequence QNANESVNEDYDDDLDDDDYDD. A compositionally biased stretch (acidic residues) spans 362–377; the sequence is VNEDYDDDLDDDDYDD.

It belongs to the TRAFAC class OBG-HflX-like GTPase superfamily. OBG GTPase family. Monomer. Mg(2+) serves as cofactor.

The protein resides in the cytoplasm. An essential GTPase which binds GTP, GDP and possibly (p)ppGpp with moderate affinity, with high nucleotide exchange rates and a fairly low GTP hydrolysis rate. Plays a role in control of the cell cycle, stress response, ribosome biogenesis and in those bacteria that undergo differentiation, in morphogenesis control. This is GTPase Obg from Shewanella piezotolerans (strain WP3 / JCM 13877).